Consider the following 229-residue polypeptide: Lipoprotein-releasing system ATP-binding protein LolD (229 aa).

The ABC transporter domain maps to 7–229 (LQCINLTKSF…KNGQLFNNKN (223 aa)). 43-50 (GKSGSGKS) is a binding site for ATP.

Belongs to the ABC transporter superfamily. Lipoprotein translocase (TC 3.A.1.125) family. In terms of assembly, the complex is composed of two ATP-binding proteins (LolD) and two transmembrane proteins (LolC and LolE).

The protein localises to the cell inner membrane. In terms of biological role, part of the ABC transporter complex LolCDE involved in the translocation of mature outer membrane-directed lipoproteins, from the inner membrane to the periplasmic chaperone, LolA. Responsible for the formation of the LolA-lipoprotein complex in an ATP-dependent manner. The polypeptide is Lipoprotein-releasing system ATP-binding protein LolD (Buchnera aphidicola subsp. Schizaphis graminum (strain Sg)).